We begin with the raw amino-acid sequence, 35 residues long: Conotoxin TxMEKL-0422 (35 aa).

The disordered stretch occupies residues 1 to 35; the sequence is NPASCCSCADVDPGRASRKTPKGEDQVFIKEKDRC. Residues 21–35 show a composition bias toward basic and acidic residues; sequence PKGEDQVFIKEKDRC.

In terms of processing, contains disulfide bonds. As to expression, expressed by the venom duct.

The protein localises to the secreted. This is Conotoxin TxMEKL-0422 from Conus textile (Cloth-of-gold cone).